The following is a 309-amino-acid chain: Ribonuclease Z (309 aa).

His63, His65, Asp67, His68, His145, Asp216, and His274 together coordinate Zn(2+). The active-site Proton acceptor is Asp67.

The protein belongs to the RNase Z family. As to quaternary structure, homodimer. Zn(2+) serves as cofactor.

It carries out the reaction Endonucleolytic cleavage of RNA, removing extra 3' nucleotides from tRNA precursor, generating 3' termini of tRNAs. A 3'-hydroxy group is left at the tRNA terminus and a 5'-phosphoryl group is left at the trailer molecule.. Zinc phosphodiesterase, which displays some tRNA 3'-processing endonuclease activity. Probably involved in tRNA maturation, by removing a 3'-trailer from precursor tRNA. In Streptococcus mutans serotype c (strain ATCC 700610 / UA159), this protein is Ribonuclease Z.